Here is a 180-residue protein sequence, read N- to C-terminus: Large ribosomal subunit protein uL5 (180 aa).

This sequence belongs to the universal ribosomal protein uL5 family. In terms of assembly, part of the 50S ribosomal subunit; part of the 5S rRNA/L5/L18/L25 subcomplex. Contacts the 5S rRNA and the P site tRNA. Forms a bridge to the 30S subunit in the 70S ribosome.

Its function is as follows. This is one of the proteins that bind and probably mediate the attachment of the 5S RNA into the large ribosomal subunit, where it forms part of the central protuberance. In the 70S ribosome it contacts protein S13 of the 30S subunit (bridge B1b), connecting the 2 subunits; this bridge is implicated in subunit movement. Contacts the P site tRNA; the 5S rRNA and some of its associated proteins might help stabilize positioning of ribosome-bound tRNAs. The protein is Large ribosomal subunit protein uL5 of Streptococcus pneumoniae (strain JJA).